A 158-amino-acid chain; its full sequence is uncharacterized protein (158 aa).

2 consecutive transmembrane segments (helical) span residues Leu-10 to Val-30 and Ile-137 to Phe-157.

It localises to the cell membrane. This is an uncharacterized protein from Bacillus subtilis (strain 168).